The following is a 725-amino-acid chain: Putative coiled-coil domain-containing protein 144B (725 aa).

Over residues Met1–Gly11 the composition is skewed to basic and acidic residues. 5 disordered regions span residues Met1–Lys25, Ala87–Glu188, Leu213–Arg260, Asn453–Arg485, and Glu528–Asn586. 2 stretches are compositionally biased toward polar residues: residues Pro129–Glu150 and Pro165–Thr178. Residues Glu215 to Gln244 adopt a coiled-coil conformation. Residues Gln224–Gln234 show a composition bias toward acidic residues. The span at Asn453–Lys467 shows a compositional bias: polar residues. Residues Tyr490–Thr546 are a coiled coil. Residues Glu528–Asn537 are compositionally biased toward basic and acidic residues. Residues Gly543–Gly552 are compositionally biased toward low complexity. Positions Pro563–Lys583 are enriched in basic and acidic residues. Positions Leu648–Glu713 form a coiled coil.

The protein belongs to the CCDC144 family.

In Homo sapiens (Human), this protein is Putative coiled-coil domain-containing protein 144B.